We begin with the raw amino-acid sequence, 204 residues long: Calexcitin-1 (204 aa).

EF-hand domains are found at residues 25–61 (FLVK…VRDI), 75–110 (SLAA…TDAK), and 115–150 (WFKD…YGFD). Ca(2+) contacts are provided by D39, N41, S43, Q45, D50, D88, D90, D92, E99, D128, S130, D132, and E139.

The polypeptide is Calexcitin-1 (cex-1) (Caenorhabditis elegans).